The sequence spans 178 residues: Fimbrial adapter PapK (178 aa).

The signal sequence occupies residues 1–21 (MIKSTGALLLFAALSAGQAIA).

It localises to the secreted. The protein resides in the fimbrium. Its function is as follows. Adapter that links the pilus rod to the base of the tip fibrillum. Regulates the length of the tip fibrillum and joins it to the pilus rod. Pili are polar filaments radiating from the surface of the bacterium to a length of 0.5-1.5 micrometers and numbering 100-300 per cell, and enable bacteria to colonize the epithelium of specific host organs. This is Fimbrial adapter PapK (papK) from Escherichia coli O6:H1 (strain CFT073 / ATCC 700928 / UPEC).